We begin with the raw amino-acid sequence, 236 residues long: 2-C-methyl-D-erythritol 4-phosphate cytidylyltransferase (236 aa).

The protein belongs to the IspD/TarI cytidylyltransferase family. IspD subfamily. Homodimer.

The enzyme catalyses 2-C-methyl-D-erythritol 4-phosphate + CTP + H(+) = 4-CDP-2-C-methyl-D-erythritol + diphosphate. It participates in isoprenoid biosynthesis; isopentenyl diphosphate biosynthesis via DXP pathway; isopentenyl diphosphate from 1-deoxy-D-xylulose 5-phosphate: step 2/6. Its function is as follows. Catalyzes the formation of 4-diphosphocytidyl-2-C-methyl-D-erythritol from CTP and 2-C-methyl-D-erythritol 4-phosphate (MEP). This chain is 2-C-methyl-D-erythritol 4-phosphate cytidylyltransferase, found in Escherichia coli O139:H28 (strain E24377A / ETEC).